The following is a 271-amino-acid chain: HTH-type transcriptional repressor AllR (271 aa).

An HTH iclR-type domain is found at Ala21 to Leu83. Residues Val43–Lys62 constitute a DNA-binding region (H-T-H motif). Residues Val98–Leu267 enclose the IclR-ED domain. Residues Ser154–Ala156, Asp207, Cys217, and Ser234–Ser236 each bind glyoxylate.

In terms of biological role, negative regulator of allantoin and glyoxylate utilization operons. Binds to the gcl promoter and to the allS-allA intergenic region. In Escherichia coli O6:H1 (strain CFT073 / ATCC 700928 / UPEC), this protein is HTH-type transcriptional repressor AllR (allR).